Consider the following 541-residue polypeptide: Arginine--tRNA ligase (541 aa).

The 'HIGH' region motif lies at 119-129; that stretch reads ANPTGPLHIGH.

It belongs to the class-I aminoacyl-tRNA synthetase family. In terms of assembly, monomer.

Its subcellular location is the cytoplasm. The catalysed reaction is tRNA(Arg) + L-arginine + ATP = L-arginyl-tRNA(Arg) + AMP + diphosphate. This chain is Arginine--tRNA ligase, found in Helicobacter acinonychis (strain Sheeba).